The following is a 284-amino-acid chain: MYVVSTKQMLNNAQRGGYAVPAFNIHNLETMQVVVETAANLHAPVIIAGTPGTFTHAGTENLLALVSAMAKQYHHPLAIHLDHHTKFDDIAQKVRSGVRSVMIDASHLPFAQNISRVKEVVDFCHRFDVSVEAELGQLGGQEDDVQVNEADAFYTNPAQAREFAEATGIDSLAVAIGTAHGMYASAPALDFSRLENIRQWVNLPLVLHGASGLSTKDIQQTIKLGICKINVATELKNAFSQALKNYLTEHPEATDPRDYLQSAKSAMRDVVSKVIADCGCEGRA.

Aspartate 82 serves as the catalytic Proton donor. Positions 83 and 180 each coordinate Zn(2+). Glycine 181 is a binding site for dihydroxyacetone phosphate. Histidine 208 lines the Zn(2+) pocket. Dihydroxyacetone phosphate-binding positions include glycine 209–serine 211 and asparagine 230–threonine 233.

Belongs to the class II fructose-bisphosphate aldolase family. TagBP aldolase GatY subfamily. In terms of assembly, forms a complex with GatZ. Zn(2+) serves as cofactor.

It carries out the reaction D-tagatofuranose 1,6-bisphosphate = D-glyceraldehyde 3-phosphate + dihydroxyacetone phosphate. It functions in the pathway carbohydrate metabolism; D-tagatose 6-phosphate degradation; D-glyceraldehyde 3-phosphate and glycerone phosphate from D-tagatose 6-phosphate: step 2/2. Its function is as follows. Catalytic subunit of the tagatose-1,6-bisphosphate aldolase GatYZ, which catalyzes the reversible aldol condensation of dihydroxyacetone phosphate (DHAP or glycerone-phosphate) with glyceraldehyde 3-phosphate (G3P) to produce tagatose 1,6-bisphosphate (TBP). Requires GatZ subunit for full activity and stability. Is involved in the catabolism of galactitol. This Escherichia coli O8 (strain IAI1) protein is D-tagatose-1,6-bisphosphate aldolase subunit GatY.